Here is a 662-residue protein sequence, read N- to C-terminus: Protein associated with UVRAG as autophagy enhancer (662 aa).

Disordered stretches follow at residues 1–34 and 58–131; these read MVSQ…RLLN and DVQQ…SLSS. Residues 58 to 71 show a composition bias toward low complexity; sequence DVQQQPQDLQSQVP. Polar residues predominate over residues 100 to 113; it reads AETTLSEDTTDSVG. Over residues 114–131 the composition is skewed to low complexity; it reads SASPHGSSEKSSSFSLSS. Phosphoserine; by MTOR is present on Ser157. The interval 196-235 is interaction with UVRAG; that stretch reads EVFVLPVDVEKENAHFYVADMIISAMEKMKCNILSQQQTE. 5 positions are modified to N6-acetyllysine: Lys483, Lys523, Lys533, Lys573, and Lys633.

Interacts with UVRAG; the interaction is direct and promotes association with the PI3K/PI3KC3 and HOPS complexes. Interacts with STX17. Post-translationally, phosphorylated by MTOR at Ser-157 under nutrient-rich conditions. Phosphorylation prevents acetylation by KAT5/TIP60 and impairs RUBCNL/PACER function and autophagosome maturation. Under autophagy induction, Phosphorylation by MTOR is repressed, enabling acetylation by KAT5/TIP60. In terms of processing, acetylated by KAT5/TIP60 under autophagy induction, promoting autophagosome maturation and lipid metabolism. Acetylation is prevented by phosphorylation by MTOR. Lys-483 and Lys-573 constitute the key sites for tuning function in autophagy. As to expression, expressed weakly in cervical carcinoma cell lines.

The protein localises to the cytoplasmic vesicle. It is found in the autophagosome membrane. Functionally, regulator of autophagy that promotes autophagosome maturation by facilitating the biogenesis of phosphatidylinositol 3-phosphate (PtdIns(3)P) in late steps of autophagy. Acts by antagonizing RUBCN, thereby stimulating phosphatidylinositol 3-kinase activity of the PI3K/PI3KC3 complex. Following anchorage to the autophagosomal SNARE STX17, promotes the recruitment of PI3K/PI3KC3 and HOPS complexes to the autophagosome to regulate the fusion specificity of autophagosomes with late endosomes/lysosomes. Binds phosphoinositides phosphatidylinositol 3-phosphate (PtdIns(3)P), 4-phosphate (PtdIns(4)P) and 5-phosphate (PtdIns(5)P). In addition to its role in autophagy, acts as a regulator of lipid and glycogen homeostasis. May act as a tumor suppressor. This Homo sapiens (Human) protein is Protein associated with UVRAG as autophagy enhancer.